Consider the following 57-residue polypeptide: Large ribosomal subunit protein bL32 (57 aa).

The protein belongs to the bacterial ribosomal protein bL32 family.

The polypeptide is Large ribosomal subunit protein bL32 (Streptomyces avermitilis (strain ATCC 31267 / DSM 46492 / JCM 5070 / NBRC 14893 / NCIMB 12804 / NRRL 8165 / MA-4680)).